A 168-amino-acid chain; its full sequence is DNA damage-inducible transcript 3 protein (168 aa).

Positions 10–18 are interaction with TRIB3; the sequence is FETVSSWEL. The tract at residues 10–26 is N-terminal; the sequence is FETVSSWELEAWYEDLQ. Phosphoserine; by CK2 occurs at positions 14, 15, 30, and 31. A disordered region spans residues 34–130; that stretch reads IGGTYISSPG…EKEQENERKV (97 aa). Over residues 73–88 the composition is skewed to low complexity; sequence TSTSQSPRSPDSSQSS. Residues S78 and S81 each carry the phosphoserine; by MAPK14 modification. The region spanning 98 to 161 is the bZIP domain; it reads QGRTRKRKQS…ETTRRALIDR (64 aa). The tract at residues 100–129 is basic motif; that stretch reads RTRKRKQSGQCAARAGKQRMKEKEQENERK. A compositionally biased stretch (basic and acidic residues) spans 118–130; it reads RMKEKEQENERKV. Positions 133–147 are leucine-zipper; the sequence is LAEENERLKLEIERL.

The protein belongs to the bZIP family. As to quaternary structure, heterodimer. Interacts with TCF7L2/TCF4, EP300/P300, HDAC1, HDAC5 and HDAC6. Interacts with TRIB3 which blocks its association with EP300/P300. Interacts with FOXO3, CEBPB and ATF4. Post-translationally, ubiquitinated, leading to its degradation by the proteasome. Phosphorylation at serine residues by MAPK14 enhances its transcriptional activation activity while phosphorylation at serine residues by CK2 inhibits its transcriptional activation activity.

Its subcellular location is the cytoplasm. The protein resides in the nucleus. Multifunctional transcription factor in ER stress response. Plays an essential role in the response to a wide variety of cell stresses and induces cell cycle arrest and apoptosis in response to ER stress. Plays a dual role both as an inhibitor of CCAAT/enhancer-binding protein (C/EBP) function and as an activator of other genes. Acts as a dominant-negative regulator of C/EBP-induced transcription: dimerizes with members of the C/EBP family, impairs their association with C/EBP binding sites in the promoter regions, and inhibits the expression of C/EBP regulated genes. Positively regulates the transcription of TRIB3, IL6, IL8, IL23, TNFRSF10B/DR5, PPP1R15A/GADD34, BBC3/PUMA, BCL2L11/BIM and ERO1L. Negatively regulates; expression of BCL2 and MYOD1, ATF4-dependent transcriptional activation of asparagine synthetase (ASNS), CEBPA-dependent transcriptional activation of hepcidin (HAMP) and CEBPB-mediated expression of peroxisome proliferator-activated receptor gamma (PPARG). Inhibits the canonical Wnt signaling pathway by binding to TCF7L2/TCF4, impairing its DNA-binding properties and repressing its transcriptional activity. Plays a regulatory role in the inflammatory response through the induction of caspase-11 (CASP4/CASP11) which induces the activation of caspase-1 (CASP1) and both these caspases increase the activation of pro-IL1B to mature IL1B which is involved in the inflammatory response. Acts as a major regulator of postnatal neovascularization through regulation of endothelial nitric oxide synthase (NOS3)-related signaling. The polypeptide is DNA damage-inducible transcript 3 protein (Ddit3) (Rattus norvegicus (Rat)).